The sequence spans 295 residues: Bifunctional protein FolD (295 aa).

NADP(+) is bound by residues 167-169 (GRS), Ser192, and Ile233.

This sequence belongs to the tetrahydrofolate dehydrogenase/cyclohydrolase family. Homodimer.

It carries out the reaction (6R)-5,10-methylene-5,6,7,8-tetrahydrofolate + NADP(+) = (6R)-5,10-methenyltetrahydrofolate + NADPH. The enzyme catalyses (6R)-5,10-methenyltetrahydrofolate + H2O = (6R)-10-formyltetrahydrofolate + H(+). It participates in one-carbon metabolism; tetrahydrofolate interconversion. Functionally, catalyzes the oxidation of 5,10-methylenetetrahydrofolate to 5,10-methenyltetrahydrofolate and then the hydrolysis of 5,10-methenyltetrahydrofolate to 10-formyltetrahydrofolate. The protein is Bifunctional protein FolD of Paramagnetospirillum magneticum (strain ATCC 700264 / AMB-1) (Magnetospirillum magneticum).